The chain runs to 772 residues: Semaphorin-3A (772 aa).

Residues 1–20 (MGWFTGIACLFWGVLLTARA) form the signal peptide. The 484-residue stretch at 31–514 (RLKLSYKEML…STAGVAQLPL (484 aa)) folds into the Sema domain. Asparagine 53 is a glycosylation site (N-linked (GlcNAc...) asparagine). Cysteine 103 and cysteine 114 are disulfide-bonded. Asparagine 125 carries an N-linked (GlcNAc...) asparagine glycan. Cystine bridges form between cysteine 132/cysteine 141, cysteine 269/cysteine 381, cysteine 293/cysteine 341, and cysteine 517/cysteine 535. The 87-residue stretch at 579–665 (PSLEERIIYG…GFMQTLLKVT (87 aa)) folds into the Ig-like C2-type domain. A glycan (N-linked (GlcNAc...) asparagine) is linked at asparagine 591. An intrachain disulfide couples cysteine 650 to cysteine 723. Residues 729-738 (RDRKQRRQRP) are compositionally biased toward basic residues. Residues 729 to 772 (RDRKQRRQRPGHSQGSSNKWKHMQESKKGRNRRTHEFERAPRSV) are disordered. Positions 750-772 (HMQESKKGRNRRTHEFERAPRSV) are enriched in basic and acidic residues.

It belongs to the semaphorin family. As to quaternary structure, interacts with PXND1.

Its subcellular location is the secreted. In terms of biological role, plays a role in growth cones guidance. May function to pattern sensory projections by selectively repelling axons that normally terminate dorsally. Involved in the development of the olfactory system and in neuronal control of puberty. The sequence is that of Semaphorin-3A (Sema3a) from Mus musculus (Mouse).